Here is a 138-residue protein sequence, read N- to C-terminus: MASLPDTNKLLRNFSRCRNWEERYLYMIELGAKLPPLTDEQRQPENLIAGCQSQVWILLRMNHQNKVEFIGDSDAAIVKGLVAIVFILFQGKTTQEILDLDVTEYFGKLSLEQHLTPSRTQGLHAMIHAIRNRTSKMV.

Residue cysteine 51 is the Cysteine persulfide intermediate of the active site.

The protein belongs to the SufE family. Homodimer. Interacts with SufS.

It localises to the cytoplasm. It functions in the pathway cofactor biosynthesis; iron-sulfur cluster biosynthesis. Functionally, participates in cysteine desulfuration mediated by SufS. Cysteine desulfuration mobilizes sulfur from L-cysteine to yield L-alanine and constitutes an essential step in sulfur metabolism for biosynthesis of a variety of sulfur-containing biomolecules. Functions as a sulfur acceptor for SufS, by mediating the direct transfer of the sulfur atom from the S-sulfanylcysteine of SufS, an intermediate product of cysteine desulfuration process. In Photorhabdus laumondii subsp. laumondii (strain DSM 15139 / CIP 105565 / TT01) (Photorhabdus luminescens subsp. laumondii), this protein is Cysteine desulfuration protein SufE.